The sequence spans 265 residues: Putative cysteine-rich receptor-like protein kinase 9 (265 aa).

Positions 1-23 are cleaved as a signal peptide; the sequence is MSSLISFIFLFLFSFLTSFKASA. 2 Gnk2-homologous domains span residues 27–131 and 142–244; these read FYLN…DKNI and FILS…LYSF. 6 N-linked (GlcNAc...) asparagine glycosylation sites follow: N35, N60, N69, N153, N177, and N246.

The protein belongs to the protein kinase superfamily. Ser/Thr protein kinase family. CRK subfamily.

The protein resides in the secreted. This chain is Putative cysteine-rich receptor-like protein kinase 9 (CRK9), found in Arabidopsis thaliana (Mouse-ear cress).